Reading from the N-terminus, the 676-residue chain is Head-specific guanylate cyclase (676 aa).

Residues 466 to 593 (TILFSDIVGF…HSVTIANKFE (128 aa)) enclose the Guanylate cyclase domain.

The protein belongs to the adenylyl cyclase class-4/guanylyl cyclase family. As to quaternary structure, heterodimer. Head, where it is preferentially expressed in the CNS and the retina. Not found in bodies.

It is found in the cytoplasm. The enzyme catalyses GTP = 3',5'-cyclic GMP + diphosphate. May have a role in phototransduction. Catalyzes the conversion of GTP to cGMP, a common second messenger that is utilized in a wide variety of cells and signal transduction pathways. A second subunit is required for enzyme activity. The chain is Head-specific guanylate cyclase (Gycalpha99B) from Drosophila melanogaster (Fruit fly).